Reading from the N-terminus, the 941-residue chain is Myosin heavy chain kinase D (941 aa).

Positions 8-48 form a coiled coil; sequence KLSKKIEKILEKNDYLKKKVEQLTKSVDNHEFKIQELLLLL. Low complexity-rich tracts occupy residues 57-70, 84-115, and 124-206; these read TTTT…NNST, TSTD…TTTS, and NSNN…PQLS. 2 disordered regions span residues 57–234 and 276–310; these read TTTT…KEDS and SSNN…QQQQ. A coiled-coil region spans residues 289 to 317; the sequence is SILNDQQNQQQNQQQQNQQQQQEEINFIT. Positions 337 to 582 constitute an Alpha-type protein kinase domain; it reads EYSANDDEWT…ICLQFGLPPI (246 aa). WD repeat units lie at residues 635–674, 683–720, 741–780, 783–820, 824–861, 864–902, and 909–941; these read GHDE…DLSK, AHRR…TTTT, DHTA…CIKS, AHGK…CVYG, AHDA…PTTT, QHNM…EPIK, and AHRS…WKNK.

This sequence belongs to the protein kinase superfamily. Alpha-type protein kinase family. ALPK subfamily.

It carries out the reaction L-threonyl-[myosin heavy-chain] + ATP = O-phospho-L-threonyl-[myosin heavy-chain] + ADP + H(+). Its function is as follows. Phosphorylates threonine. Not critical for regulating the assembly and disassembly of myosin II filament. The sequence is that of Myosin heavy chain kinase D (mhkD) from Dictyostelium discoideum (Social amoeba).